We begin with the raw amino-acid sequence, 505 residues long: Protein nucleotidyltransferase YdiU (505 aa).

ATP is bound by residues G102, G104, R105, K125, D137, G138, R188, and R195. D264 (proton acceptor) is an active-site residue. Residues N265 and D274 each coordinate Mg(2+). D274 contributes to the ATP binding site.

The protein belongs to the SELO family. Mg(2+) is required as a cofactor. Mn(2+) serves as cofactor.

It carries out the reaction L-seryl-[protein] + ATP = 3-O-(5'-adenylyl)-L-seryl-[protein] + diphosphate. The enzyme catalyses L-threonyl-[protein] + ATP = 3-O-(5'-adenylyl)-L-threonyl-[protein] + diphosphate. It catalyses the reaction L-tyrosyl-[protein] + ATP = O-(5'-adenylyl)-L-tyrosyl-[protein] + diphosphate. The catalysed reaction is L-histidyl-[protein] + UTP = N(tele)-(5'-uridylyl)-L-histidyl-[protein] + diphosphate. It carries out the reaction L-seryl-[protein] + UTP = O-(5'-uridylyl)-L-seryl-[protein] + diphosphate. The enzyme catalyses L-tyrosyl-[protein] + UTP = O-(5'-uridylyl)-L-tyrosyl-[protein] + diphosphate. Nucleotidyltransferase involved in the post-translational modification of proteins. It can catalyze the addition of adenosine monophosphate (AMP) or uridine monophosphate (UMP) to a protein, resulting in modifications known as AMPylation and UMPylation. This is Protein nucleotidyltransferase YdiU from Nitrobacter winogradskyi (strain ATCC 25391 / DSM 10237 / CIP 104748 / NCIMB 11846 / Nb-255).